We begin with the raw amino-acid sequence, 206 residues long: Probable thymidylate kinase (206 aa).

Residue 10–17 coordinates ATP; that stretch reads GIDGSGKS.

The protein belongs to the thymidylate kinase family.

The catalysed reaction is dTMP + ATP = dTDP + ADP. This is Probable thymidylate kinase from Methanosarcina mazei (strain ATCC BAA-159 / DSM 3647 / Goe1 / Go1 / JCM 11833 / OCM 88) (Methanosarcina frisia).